A 155-amino-acid chain; its full sequence is uncharacterized protein (155 aa).

This is an uncharacterized protein from Autographa californica nuclear polyhedrosis virus (AcMNPV).